The sequence spans 101 residues: NAD(P)H-quinone oxidoreductase subunit 4L, chloroplastic (101 aa).

3 consecutive transmembrane segments (helical) span residues 2–22, 32–52, and 61–81; these read MLEH…YGLI, MCLE…SDFF, and IFSI…SAIV.

This sequence belongs to the complex I subunit 4L family. NDH is composed of at least 16 different subunits, 5 of which are encoded in the nucleus.

Its subcellular location is the plastid. The protein localises to the chloroplast thylakoid membrane. The catalysed reaction is a plastoquinone + NADH + (n+1) H(+)(in) = a plastoquinol + NAD(+) + n H(+)(out). The enzyme catalyses a plastoquinone + NADPH + (n+1) H(+)(in) = a plastoquinol + NADP(+) + n H(+)(out). NDH shuttles electrons from NAD(P)H:plastoquinone, via FMN and iron-sulfur (Fe-S) centers, to quinones in the photosynthetic chain and possibly in a chloroplast respiratory chain. The immediate electron acceptor for the enzyme in this species is believed to be plastoquinone. Couples the redox reaction to proton translocation, and thus conserves the redox energy in a proton gradient. The protein is NAD(P)H-quinone oxidoreductase subunit 4L, chloroplastic of Citrus sinensis (Sweet orange).